The following is a 1040-amino-acid chain: DIS3-like exonuclease 1 (1040 aa).

The region spanning 232–310 is the CSD1 domain; it reads AGIKSGRYKQ…KGRTGALCEN (79 aa). The CSD2 domain occupies 360-426; it reads VLVMPWDYRI…AEIATILVEN (67 aa). Residues 459–808 enclose the RNB domain; sequence RLDLRETHLV…VHRLLLAAVN (350 aa).

It belongs to the RNR ribonuclease family. In terms of assembly, component of the RNA exosome complex. Requires Mg(2+) as cofactor.

The protein localises to the cytoplasm. It catalyses the reaction Exonucleolytic cleavage in the 3'- to 5'-direction to yield nucleoside 5'-phosphates.. In terms of biological role, catalytic component of the RNA exosome complex which has 3'-&gt;5' exoribonuclease activity and participates in a multitude of cellular RNA processing and degradation events. This Xenopus laevis (African clawed frog) protein is DIS3-like exonuclease 1 (dis3l).